The following is a 61-amino-acid chain: Large ribosomal subunit protein uL30 (61 aa).

Belongs to the universal ribosomal protein uL30 family. As to quaternary structure, part of the 50S ribosomal subunit.

The polypeptide is Large ribosomal subunit protein uL30 (Jannaschia sp. (strain CCS1)).